Consider the following 333-residue polypeptide: Small GTPase-like protein LIP2 (333 aa).

The segment at 11 to 288 is small GTPase-like; the sequence is NKEHMVAPLC…YKYNTLPQHN (278 aa). Residues 29–36, 90–94, and 160–163 contribute to the GTP site; these read GDSGVGKS, DVSGH, and NKAD. The segment covering 242–253 has biased composition (polar residues); the sequence is SPSSAWSLSHAP. The segment at 242 to 265 is disordered; that stretch reads SPSSAWSLSHAPSQRLDEGTSDED.

The protein belongs to the small GTPase superfamily.

The chain is Small GTPase-like protein LIP2 from Arabidopsis thaliana (Mouse-ear cress).